We begin with the raw amino-acid sequence, 96 residues long: Muconolactone Delta-isomerase 1 (96 aa).

Belongs to the muconolactone Delta-isomerase family. As to quaternary structure, homodecamer.

The catalysed reaction is (S)-muconolactone = (4,5-dihydro-5-oxofuran-2-yl)-acetate. The protein operates within aromatic compound metabolism; beta-ketoadipate pathway; 5-oxo-4,5-dihydro-2-furylacetate from catechol: step 3/3. In Acinetobacter lwoffii, this protein is Muconolactone Delta-isomerase 1 (catC1).